The following is a 240-amino-acid chain: MNQASFFVADKAIFGGYPSWEQVQELQTAGVVWFVDLTEECEKNVVLYHQLVPNWINYPIKDGGTPQNREKFLTFLLAVQILVDGLGPGEKIYLHCRGGHGRSGLVIACFLAMTLNISPKKSLFLVKLYHSQRPNLVNTRWEREWPLNPTQKRFVQKFFGTFLLRSGFEAENTSAYKKSDHVWYFVRINVWLHQNPQLLAVVLNSGLKTIKGEGPVSKILQQLRYYILFSKAKKLVDCCS.

In terms of domain architecture, Tyrosine-protein phosphatase spans 3–151 (QASFFVADKA…EREWPLNPTQ (149 aa)). The Phosphocysteine intermediate role is filled by Cys96.

It belongs to the protein-tyrosine phosphatase family.

The catalysed reaction is O-phospho-L-tyrosyl-[protein] + H2O = L-tyrosyl-[protein] + phosphate. This is Putative tyrosine phosphatase 067L from Aedes vexans (Inland floodwater mosquito).